A 373-amino-acid polypeptide reads, in one-letter code: Glutamate 5-kinase (373 aa).

K15 serves as a coordination point for ATP. Residues S54, D141, and N153 each coordinate substrate. ATP-binding positions include S173–D174 and T215–K221. The 79-residue stretch at R280 to K358 folds into the PUA domain.

Belongs to the glutamate 5-kinase family.

Its subcellular location is the cytoplasm. It catalyses the reaction L-glutamate + ATP = L-glutamyl 5-phosphate + ADP. It participates in amino-acid biosynthesis; L-proline biosynthesis; L-glutamate 5-semialdehyde from L-glutamate: step 1/2. Its function is as follows. Catalyzes the transfer of a phosphate group to glutamate to form L-glutamate 5-phosphate. The protein is Glutamate 5-kinase of Syntrophotalea carbinolica (strain DSM 2380 / NBRC 103641 / GraBd1) (Pelobacter carbinolicus).